The sequence spans 347 residues: Bifunctional methylenetetrahydrofolate dehydrogenase/cyclohydrolase 2, mitochondrial (347 aa).

Substrate-binding positions include 98–102 (YVRNK) and 145–147 (VQL). NAD(+) contacts are provided by residues 214–216 (GRS) and R247. 323–327 (PGGVG) lines the substrate pocket.

The protein belongs to the tetrahydrofolate dehydrogenase/cyclohydrolase family. It depends on Mg(2+) as a cofactor.

The protein localises to the mitochondrion inner membrane. It carries out the reaction (6R)-5,10-methylene-5,6,7,8-tetrahydrofolate + NAD(+) = (6R)-5,10-methenyltetrahydrofolate + NADH. The enzyme catalyses (6R)-5,10-methenyltetrahydrofolate + H2O = (6R)-10-formyltetrahydrofolate + H(+). It catalyses the reaction (6R)-5,10-methylene-5,6,7,8-tetrahydrofolate + NADP(+) = (6R)-5,10-methenyltetrahydrofolate + NADPH. It functions in the pathway one-carbon metabolism; tetrahydrofolate interconversion. Its function is as follows. Bifunctional mitochondrial folate-interconverting enzyme that has both NAD/NADP-dependent methylenetetrahydrofolate dehydrogenase and methenyltetrahydrofolate cyclohydrolase activities. The chain is Bifunctional methylenetetrahydrofolate dehydrogenase/cyclohydrolase 2, mitochondrial from Callithrix jacchus (White-tufted-ear marmoset).